A 964-amino-acid polypeptide reads, in one-letter code: MSLSAARSFLSEAAYGEQELDANSALMELDKGLRSCKLGEQCEAVVLFPKLFQKYPFPILINSAFLKLADIFRLGNNFLRLCVLKVTQLSEKHLEKILNVDEFVKRVFSVIHSNDPVARAITLRMLGSLASIIPERKNAHHSIRQSLDSHDNVEVEAAIFAAASFSSHSKDFAAGICNKISEMIQGLDTPVELKLKLIPMLQHMHHDASLASCSRELLQELVSSYPSTSMLIVTLHTFTQLATSSLVDIPEQICLLLQYLKEDPRKAVKRLSIQDLKLLAKKAPHLWTRKNIQVLCECALHTPYNSLKLGMLSVLSTLSGTIAIKQYFSPNAGDSSPAPHHTDLVKLAQECCYHSDLAVAAHGITVLTSIAAFCPEKEVIQLEQETVMGMESLILLCSQDDSKTAQATLKTALTSLVQMLKTCPHLSQSSVELLLRQLHCACDPARVLMCQALAAIATQQPVLVEGMLGDLLELFRVASHRTSEKQQELLVSLATVLFVASQASLSAEVKAVIRQQLENVANGWTVYQIARQASRMGCHDFSRELYQSLRTRVASEHFYFWLNSLMEFSQAEQCLSGLEDGDYSAAMSAISEALKSYQKGIASLTAASTPLSPLTFQCEFVKLRIDTLQALSQLICTCNSLKTSPPPAIATTIALSSGSDLQRCGRISTQMKFSMDEFRSLAARYADLYQSSFDADYATLRNVELQQQSCLLVSYVIEALIIDPQTASFQEFGTHGSILAESEYELRMMAVFNHVLEEVENLSRKHPPVSYLHTGCLCDTVIAILKIPLSFQRYFFQKLQSTSIKLALSPSPRTPNEPIPVQNNQQLTLKVEGVIQHGSSPGLFRKIQAVCLKVSSTLQTKPGSDFKIPLESKTNEIEQKVEPHNDYFSTQFLLNFSILGTHQVSVEASVVDTSGIEWKTGPKNTVSVKSLEDPYSQQLRHQLQQQQQNVPQPAAQRNISTRFQ.

The span at 937–958 (QQLRHQLQQQQQNVPQPAAQRN) shows a compositional bias: low complexity. A disordered region spans residues 937–964 (QQLRHQLQQQQQNVPQPAAQRNISTRFQ).

It belongs to the Integrator subunit 7 family. Component of the Integrator complex, composed of core subunits INTS1, INTS2, INTS3, INTS4, INTS5, INTS6, INTS7, INTS8, INTS9/RC74, INTS10, INTS11/CPSF3L, INTS12, INTS13, INTS14 and INTS15. The core complex associates with protein phosphatase 2A subunits PPP2CA and PPP2R1A, to form the Integrator-PP2A (INTAC) complex.

It localises to the nucleus. The protein localises to the chromosome. Its subcellular location is the cytoplasm. Functionally, component of the integrator complex, a multiprotein complex that terminates RNA polymerase II (Pol II) transcription in the promoter-proximal region of genes. The integrator complex provides a quality checkpoint during transcription elongation by driving premature transcription termination of transcripts that are unfavorably configured for transcriptional elongation: the complex terminates transcription by (1) catalyzing dephosphorylation of the C-terminal domain (CTD) of Pol II subunit POLR2A/RPB1 and SUPT5H/SPT5, (2) degrading the exiting nascent RNA transcript via endonuclease activity and (3) promoting the release of Pol II from bound DNA. The integrator complex is also involved in terminating the synthesis of non-coding Pol II transcripts, such as enhancer RNAs (eRNAs), small nuclear RNAs (snRNAs), telomerase RNAs and long non-coding RNAs (lncRNAs). Essential during embryogenesis for eye development. The sequence is that of Integrator complex subunit 7 (ints7) from Danio rerio (Zebrafish).